The sequence spans 180 residues: uncharacterized protein (180 aa).

Positions 114–136 (DKISESDSLPDEYKEYVVKHDSD) are enriched in basic and acidic residues. The segment at 114–180 (DKISESDSLP…NFDNPDDNPK (67 aa)) is disordered. Over residues 137-146 (NSDNDSDNSD) the composition is skewed to acidic residues. The span at 147–173 (NDSNNSDNDSNNSDSDSDNSNDPNNFD) shows a compositional bias: low complexity.

This is an uncharacterized protein from Acanthamoeba polyphaga (Amoeba).